The primary structure comprises 269 residues: uncharacterized protein (269 aa).

8 helical membrane-spanning segments follow: residues 9–29 (YIIGLVLALGVSFATLLAHLF), 50–70 (FMLGGYLLVEYLSFLLMIVPL), 82–102 (FSIIHTSIWYNVFVVFTVWAF), 107–127 (LYWTAFFSLCLFSSSFTMYGQ), 147–167 (LVFGKSLWFVVYAFSAALHCT), 173–193 (VFSNVFIWFFAAMYLVPILGF), 200–220 (LVSAYLFLSIGIGQMFIHLFA), and 224–244 (IFAFIIAGLMTLFAALLFLLP).

The protein resides in the membrane. This is an uncharacterized protein from Schizosaccharomyces pombe (strain 972 / ATCC 24843) (Fission yeast).